The sequence spans 381 residues: MEKKPKGTRTGYTTGACSAAAARAATLGLVRGRVPDQVECELPNGQRVVFAVTDGRCEGATAHAVVIKDAGDDPDVTDKARLTADVALLPEAVGAVVLKGGEGVGTITRQGLGLEVGGPAINPVPRRNIEANVREAAGDLLERAGLEVVISVPGGEEIAKRTLNYRLGIVGGISILGTTGIVHPYSTAAFRASVIQAIEVAANQGQDVVVLTTGGRTERFVMNELPQLPPVCFVQMGDFLKYALDTVVRCGLRHVVIGGMVGKLTKIAQGETITHANRNAVDTDLLADIAAEVGAPAEVCADIRNSAMARYASERMEDLGLITAFYEALGRRVIRTLRERYPDRFTLRILMCDFEANKLAEVAEEDSPGLRLSSPLPRGED.

The protein belongs to the CbiD family.

It catalyses the reaction Co-precorrin-5B + S-adenosyl-L-methionine = Co-precorrin-6A + S-adenosyl-L-homocysteine. Its pathway is cofactor biosynthesis; adenosylcobalamin biosynthesis; cob(II)yrinate a,c-diamide from sirohydrochlorin (anaerobic route): step 6/10. Its function is as follows. Catalyzes the methylation of C-1 in cobalt-precorrin-5B to form cobalt-precorrin-6A. This chain is Cobalt-precorrin-5B C(1)-methyltransferase, found in Methylococcus capsulatus (strain ATCC 33009 / NCIMB 11132 / Bath).